Reading from the N-terminus, the 106-residue chain is N(4)-acetylcytidine amidohydrolase (106 aa).

The 97-residue stretch at 9 to 105 folds into the ASCH domain; sequence TFFEFLTPLI…ELYVIEYELI (97 aa). K23 (proton acceptor) is an active-site residue. T26 functions as the Nucleophile in the catalytic mechanism. Catalysis depends on E76, which acts as the Proton donor.

This sequence belongs to the N(4)-acetylcytidine amidohydrolase family.

The enzyme catalyses N(4)-acetylcytidine + H2O = cytidine + acetate + H(+). It carries out the reaction N(4)-acetyl-2'-deoxycytidine + H2O = 2'-deoxycytidine + acetate + H(+). It catalyses the reaction N(4)-acetylcytosine + H2O = cytosine + acetate + H(+). Its function is as follows. Catalyzes the hydrolysis of N(4)-acetylcytidine (ac4C). This Vibrio campbellii (strain ATCC BAA-1116) protein is N(4)-acetylcytidine amidohydrolase.